The chain runs to 205 residues: Ephrin-A1 (205 aa).

Residues M1 to A17 form the signal peptide. Positions A18 to I151 constitute an Ephrin RBD domain. N-linked (GlcNAc...) asparagine glycosylation occurs at N26. Disulfide bonds link C51–C92 and C80–C140. The GPI-anchor amidated serine moiety is linked to residue S182. Residues A183–Q205 constitute a propeptide, removed in mature form.

Belongs to the ephrin family. As to quaternary structure, monomer. Homodimer. Forms heterodimers with EPHA2. Binds to the receptor tyrosine kinases EPHA2, EPHA3, EPHA4, EPHA5, EPHA6 and EPHA7. Also binds with low affinity to EPHA1. Post-translationally, undergoes proteolysis by a metalloprotease to give rise to a soluble monomeric form. N-Glycosylation is required for binding to EPHA2 receptor and inducing its internalization.

It localises to the cell membrane. It is found in the secreted. Its function is as follows. Cell surface GPI-bound ligand for Eph receptors, a family of receptor tyrosine kinases which are crucial for migration, repulsion and adhesion during neuronal, vascular and epithelial development. Binds promiscuously Eph receptors residing on adjacent cells, leading to contact-dependent bidirectional signaling into neighboring cells. Plays an important role in angiogenesis and tumor neovascularization. The recruitment of VAV2, VAV3 and PI3-kinase p85 subunit by phosphorylated EPHA2 is critical for EFNA1-induced RAC1 GTPase activation and vascular endothelial cell migration and assembly. Exerts anti-oncogenic effects in tumor cells through activation and down-regulation of EPHA2. Activates EPHA2 by inducing tyrosine phosphorylation which leads to its internalization and degradation. Acts as a negative regulator in the tumorigenesis of gliomas by down-regulating EPHA2 and FAK. Can evoke collapse of embryonic neuronal growth cone and regulates dendritic spine morphogenesis. The protein is Ephrin-A1 (Efna1) of Rattus norvegicus (Rat).